We begin with the raw amino-acid sequence, 359 residues long: MKENRKIIHIDMDAFYASIEQRDNPKYKGKPLIVGGDPNRRGVVATCSYEARKYGIHSAMPSLTAYKLCPKAIFIRPRMEVYKKVSRQVMNILNEYSNLVEHLSLDEAFVDVSKSKRCKGSATLMALEIKERIFKEVGLTASAGVSFNKFLAKMASDFRKPDGITVITEENSKDFIRNIPIGKFFGVGRVTKNKLNNIGVFKGEDLLKFSEEELIDIFSDRGKILYEFARGIDNRPVNPYRIRKSIGKEITLREDIEDIDEMIEILERIAERVSESLCLLNKKGKTVTLKVKFNDFKHITRSITLEHFLKEQKEIMECVKDLISIVDFKNKKVRLLGITISSLEENIITEEREQLSFDV.

In terms of domain architecture, UmuC spans 7–188 (IIHIDMDAFY…IPIGKFFGVG (182 aa)). The Mg(2+) site is built by D11 and D106. E107 is an active-site residue.

The protein belongs to the DNA polymerase type-Y family. Monomer. Mg(2+) is required as a cofactor.

It localises to the cytoplasm. It catalyses the reaction DNA(n) + a 2'-deoxyribonucleoside 5'-triphosphate = DNA(n+1) + diphosphate. In terms of biological role, poorly processive, error-prone DNA polymerase involved in untargeted mutagenesis. Copies undamaged DNA at stalled replication forks, which arise in vivo from mismatched or misaligned primer ends. These misaligned primers can be extended by PolIV. Exhibits no 3'-5' exonuclease (proofreading) activity. May be involved in translesional synthesis, in conjunction with the beta clamp from PolIII. This Clostridium perfringens (strain ATCC 13124 / DSM 756 / JCM 1290 / NCIMB 6125 / NCTC 8237 / Type A) protein is DNA polymerase IV.